The following is a 336-amino-acid chain: Casein kinase I isoform beta (336 aa).

The Protein kinase domain maps to 17–285 (YKLVREIGFG…YLRQLFRLLF (269 aa)). Residues 23 to 31 (IGFGSFGHV) and K46 contribute to the ATP site. D136 functions as the Proton acceptor in the catalytic mechanism. The segment covering 309 to 320 (ASSSSGEGQQAQ) has biased composition (low complexity). The disordered stretch occupies residues 309 to 336 (ASSSSGEGQQAQTPTGKSDNTKSEMKHS). Residues 327–336 (DNTKSEMKHS) show a composition bias toward basic and acidic residues.

It belongs to the protein kinase superfamily. CK1 Ser/Thr protein kinase family. Casein kinase I subfamily. As to quaternary structure, monomer.

The protein resides in the cytoplasm. It carries out the reaction L-seryl-[protein] + ATP = O-phospho-L-seryl-[protein] + ADP + H(+). The enzyme catalyses L-threonyl-[protein] + ATP = O-phospho-L-threonyl-[protein] + ADP + H(+). In terms of biological role, casein kinases are operationally defined by their preferential utilization of acidic proteins such as caseins as substrates. It can phosphorylate a large number of proteins. Participates in Wnt signaling. In Bos taurus (Bovine), this protein is Casein kinase I isoform beta (CSNK1B).